A 335-amino-acid polypeptide reads, in one-letter code: tRNA-dihydrouridine(20/20a) synthase (335 aa).

FMN contacts are provided by residues 19 to 21 (PMM) and Gln-72. Cys-102 serves as the catalytic Proton donor. Residues Lys-141, His-173, 213–215 (NGG), and 235–236 (GR) each bind FMN.

This sequence belongs to the Dus family. DusA subfamily. The cofactor is FMN.

It catalyses the reaction 5,6-dihydrouridine(20) in tRNA + NADP(+) = uridine(20) in tRNA + NADPH + H(+). It carries out the reaction 5,6-dihydrouridine(20) in tRNA + NAD(+) = uridine(20) in tRNA + NADH + H(+). The enzyme catalyses 5,6-dihydrouridine(20a) in tRNA + NADP(+) = uridine(20a) in tRNA + NADPH + H(+). The catalysed reaction is 5,6-dihydrouridine(20a) in tRNA + NAD(+) = uridine(20a) in tRNA + NADH + H(+). Its function is as follows. Catalyzes the synthesis of 5,6-dihydrouridine (D), a modified base found in the D-loop of most tRNAs, via the reduction of the C5-C6 double bond in target uridines. Specifically modifies U20 and U20a in tRNAs. This is tRNA-dihydrouridine(20/20a) synthase from Xanthomonas campestris pv. campestris (strain ATCC 33913 / DSM 3586 / NCPPB 528 / LMG 568 / P 25).